A 475-amino-acid chain; its full sequence is tRNA-2-methylthio-N(6)-dimethylallyladenosine synthase (475 aa).

The region spanning 2–119 (AKLHITTWGC…LPEMINQIRS (118 aa)) is the MTTase N-terminal domain. Positions 11, 48, 82, 156, 160, and 163 each coordinate [4Fe-4S] cluster. Positions 142–374 (KAEGPTAFVS…QQRINHQAMQ (233 aa)) constitute a Radical SAM core domain. A TRAM domain is found at 377–440 (RLMLGTEQRI…SNSLRGEVIR (64 aa)).

It belongs to the methylthiotransferase family. MiaB subfamily. Monomer. Requires [4Fe-4S] cluster as cofactor.

It localises to the cytoplasm. It carries out the reaction N(6)-dimethylallyladenosine(37) in tRNA + (sulfur carrier)-SH + AH2 + 2 S-adenosyl-L-methionine = 2-methylsulfanyl-N(6)-dimethylallyladenosine(37) in tRNA + (sulfur carrier)-H + 5'-deoxyadenosine + L-methionine + A + S-adenosyl-L-homocysteine + 2 H(+). Catalyzes the methylthiolation of N6-(dimethylallyl)adenosine (i(6)A), leading to the formation of 2-methylthio-N6-(dimethylallyl)adenosine (ms(2)i(6)A) at position 37 in tRNAs that read codons beginning with uridine. In Haemophilus ducreyi (strain 35000HP / ATCC 700724), this protein is tRNA-2-methylthio-N(6)-dimethylallyladenosine synthase.